A 402-amino-acid polypeptide reads, in one-letter code: Tryptophan synthase beta chain (402 aa).

Lysine 88 bears the N6-(pyridoxal phosphate)lysine mark.

The protein belongs to the TrpB family. Tetramer of two alpha and two beta chains. Requires pyridoxal 5'-phosphate as cofactor.

The enzyme catalyses (1S,2R)-1-C-(indol-3-yl)glycerol 3-phosphate + L-serine = D-glyceraldehyde 3-phosphate + L-tryptophan + H2O. It participates in amino-acid biosynthesis; L-tryptophan biosynthesis; L-tryptophan from chorismate: step 5/5. The beta subunit is responsible for the synthesis of L-tryptophan from indole and L-serine. This chain is Tryptophan synthase beta chain (trpB), found in Pasteurella multocida (strain Pm70).